The chain runs to 270 residues: Glutamate racemase (270 aa).

Substrate-binding positions include 10–11 and 42–43; these read DS and YG. The active-site Proton donor/acceptor is cysteine 74. A substrate-binding site is contributed by 75-76; that stretch reads NT. Catalysis depends on cysteine 189, which acts as the Proton donor/acceptor. Residue 190–191 coordinates substrate; it reads TH.

It belongs to the aspartate/glutamate racemases family.

The catalysed reaction is L-glutamate = D-glutamate. It participates in cell wall biogenesis; peptidoglycan biosynthesis. Its function is as follows. Provides the (R)-glutamate required for cell wall biosynthesis. This Bartonella henselae (strain ATCC 49882 / DSM 28221 / CCUG 30454 / Houston 1) (Rochalimaea henselae) protein is Glutamate racemase.